The chain runs to 630 residues: Mannosyl-oligosaccharide 1,2-alpha-mannosidase IC (630 aa).

The Cytoplasmic portion of the chain corresponds to 1 to 22 (MLMRKVPGFVPASPWGLRLPQK). Residues 23–43 (FLFLLFLSGLVTLCFGALFLL) traverse the membrane as a helical; Signal-anchor for type II membrane protein segment. At 44–630 (PHSSRLKRLF…DSSGRAWGRH (587 aa)) the chain is on the lumenal side. Residues 74–140 (PAREQEPPPN…ASRPGDEGVP (67 aa)) form a disordered region. Over residues 80–89 (PPPNPAPAAP) the composition is skewed to pro residues. Residues 102-113 (PRRRKGGLRRTR) show a composition bias toward basic residues. S164 bears the Phosphoserine mark. A glycan (N-linked (GlcNAc...) asparagine) is linked at N250. Cysteines 453 and 485 form a disulfide. The active-site Proton donor is E499. T610 serves as a coordination point for Ca(2+). N-linked (GlcNAc...) asparagine glycosylation is present at N618.

It belongs to the glycosyl hydrolase 47 family. The cofactor is Ca(2+). As to expression, expressed in most tissues with the exception of lung, muscle and pancreas. Highly expressed in placenta.

Its subcellular location is the golgi apparatus membrane. It catalyses the reaction N(4)-(alpha-D-Man-(1-&gt;2)-alpha-D-Man-(1-&gt;2)-alpha-D-Man-(1-&gt;3)-[alpha-D-Man-(1-&gt;2)-alpha-D-Man-(1-&gt;3)-[alpha-D-Man-(1-&gt;2)-alpha-D-Man-(1-&gt;6)]-alpha-D-Man-(1-&gt;6)]-beta-D-Man-(1-&gt;4)-beta-D-GlcNAc-(1-&gt;4)-beta-D-GlcNAc)-L-asparaginyl-[protein] (N-glucan mannose isomer 9A1,2,3B1,2,3) + 4 H2O = N(4)-(alpha-D-Man-(1-&gt;3)-[alpha-D-Man-(1-&gt;3)-[alpha-D-Man-(1-&gt;6)]-alpha-D-Man-(1-&gt;6)]-beta-D-Man-(1-&gt;4)-beta-D-GlcNAc-(1-&gt;4)-beta-D-GlcNAc)-L-asparaginyl-[protein] (N-glucan mannose isomer 5A1,2) + 4 beta-D-mannose. It carries out the reaction N(4)-(alpha-D-Man-(1-&gt;2)-alpha-D-Man-(1-&gt;2)-alpha-D-Man-(1-&gt;3)-[alpha-D-Man-(1-&gt;3)-[alpha-D-Man-(1-&gt;2)-alpha-D-Man-(1-&gt;6)]-alpha-D-Man-(1-&gt;6)]-beta-D-Man-(1-&gt;4)-beta-D-GlcNAc-(1-&gt;4)-beta-D-GlcNAc)-L-asparaginyl-[protein] (N-glucan mannose isomer 8A1,2,3B1,3) + 3 H2O = N(4)-(alpha-D-Man-(1-&gt;3)-[alpha-D-Man-(1-&gt;3)-[alpha-D-Man-(1-&gt;6)]-alpha-D-Man-(1-&gt;6)]-beta-D-Man-(1-&gt;4)-beta-D-GlcNAc-(1-&gt;4)-beta-D-GlcNAc)-L-asparaginyl-[protein] (N-glucan mannose isomer 5A1,2) + 3 beta-D-mannose. Its pathway is protein modification; protein glycosylation. With respect to regulation, inhibited by both 1-deoxymannojirimycin and kifunensine. In terms of biological role, involved in the maturation of Asn-linked oligosaccharides. Trim alpha-1,2-linked mannose residues from Man(9)GlcNAc(2) to produce first Man(8)GlcNAc(2) then Man(6)GlcNAc and a small amount of Man(5)GlcNAc. This chain is Mannosyl-oligosaccharide 1,2-alpha-mannosidase IC (MAN1C1), found in Homo sapiens (Human).